The following is a 343-amino-acid chain: Holliday junction branch migration complex subunit RuvB (343 aa).

A large ATPase domain (RuvB-L) region spans residues 1–181 (MDRIVEIEKV…FGMQFRLQFY (181 aa)). ATP contacts are provided by residues L20, R21, G62, K65, T66, T67, 128-130 (EDF), R171, Y181, and R218. T66 contributes to the Mg(2+) binding site. The interval 182-252 (TDNELARIIS…RAKSSLDSLG (71 aa)) is small ATPAse domain (RuvB-S). Positions 255–343 (DLGFDEMDLK…EKQNKGLFNE (89 aa)) are head domain (RuvB-H). 2 residues coordinate DNA: R308 and R313.

This sequence belongs to the RuvB family. As to quaternary structure, homohexamer. Forms an RuvA(8)-RuvB(12)-Holliday junction (HJ) complex. HJ DNA is sandwiched between 2 RuvA tetramers; dsDNA enters through RuvA and exits via RuvB. An RuvB hexamer assembles on each DNA strand where it exits the tetramer. Each RuvB hexamer is contacted by two RuvA subunits (via domain III) on 2 adjacent RuvB subunits; this complex drives branch migration. In the full resolvosome a probable DNA-RuvA(4)-RuvB(12)-RuvC(2) complex forms which resolves the HJ.

It is found in the cytoplasm. The catalysed reaction is ATP + H2O = ADP + phosphate + H(+). Functionally, the RuvA-RuvB-RuvC complex processes Holliday junction (HJ) DNA during genetic recombination and DNA repair, while the RuvA-RuvB complex plays an important role in the rescue of blocked DNA replication forks via replication fork reversal (RFR). RuvA specifically binds to HJ cruciform DNA, conferring on it an open structure. The RuvB hexamer acts as an ATP-dependent pump, pulling dsDNA into and through the RuvAB complex. RuvB forms 2 homohexamers on either side of HJ DNA bound by 1 or 2 RuvA tetramers; 4 subunits per hexamer contact DNA at a time. Coordinated motions by a converter formed by DNA-disengaged RuvB subunits stimulates ATP hydrolysis and nucleotide exchange. Immobilization of the converter enables RuvB to convert the ATP-contained energy into a lever motion, pulling 2 nucleotides of DNA out of the RuvA tetramer per ATP hydrolyzed, thus driving DNA branch migration. The RuvB motors rotate together with the DNA substrate, which together with the progressing nucleotide cycle form the mechanistic basis for DNA recombination by continuous HJ branch migration. Branch migration allows RuvC to scan DNA until it finds its consensus sequence, where it cleaves and resolves cruciform DNA. This Campylobacter fetus subsp. fetus (strain 82-40) protein is Holliday junction branch migration complex subunit RuvB.